Reading from the N-terminus, the 400-residue chain is Phosphoglycerate kinase (400 aa).

Residues 20–22, arginine 35, 58–61, arginine 115, and arginine 155 each bind substrate; these read DLN and HQGR. ATP is bound by residues glutamate 330 and 356 to 359; that span reads GGDT.

This sequence belongs to the phosphoglycerate kinase family. As to quaternary structure, monomer.

It is found in the cytoplasm. The enzyme catalyses (2R)-3-phosphoglycerate + ATP = (2R)-3-phospho-glyceroyl phosphate + ADP. It functions in the pathway carbohydrate degradation; glycolysis; pyruvate from D-glyceraldehyde 3-phosphate: step 2/5. This Haloarcula marismortui (strain ATCC 43049 / DSM 3752 / JCM 8966 / VKM B-1809) (Halobacterium marismortui) protein is Phosphoglycerate kinase.